The following is a 4114-amino-acid chain: Ferrichrome siderophore peptide synthetase (4114 aa).

Carrier domains are found at residues 797 to 874 (DPAT…QSSG), 1947 to 2021 (TDSE…IDKL), 3020 to 3093 (TQSE…MQSS), and 3574 to 3650 (QALS…SQTN). An O-(pantetheine 4'-phosphoryl)serine mark is found at serine 835, serine 1982, serine 3054, and serine 3611. The tract at residues 4040–4061 (LDYSHHSQHSTHDRTPPSTPHV) is disordered. Basic and acidic residues predominate over residues 4041–4054 (DYSHHSQHSTHDRT).

It belongs to the ATP-dependent AMP-binding enzyme family. Pantetheine 4'-phosphate is required as a cofactor.

The protein operates within siderophore biosynthesis; ferrichrome biosynthesis. Multidomain peptide synthetase involved in ferrichrome biosynthesis. The protein is Ferrichrome siderophore peptide synthetase (SID2) of Mycosarcoma maydis (Corn smut fungus).